A 324-amino-acid chain; its full sequence is Probable metal transport system membrane protein CPn_0346/CP_0414/CPj0346/CpB0353 (324 aa).

10 helical membrane-spanning segments follow: residues 1-21, 39-59, 64-84, 94-114, 125-145, 165-185, 201-221, 226-246, 252-272, and 286-306; these read MALG…SVFF, IQII…TFLV, AMYA…VCLF, GTLT…IYFI, STAL…VFMT, EDIF…IFAF, LGIP…ACLV, AVGV…AKVI, SLMA…PASS, and SGIS…ISYF.

This sequence belongs to the ABC-3 integral membrane protein family.

It localises to the cell inner membrane. In terms of biological role, part of an ATP-driven transport system CPn_0346/CPn_0347/CPn_0348/CPn_0349 for a metal. The protein is Probable metal transport system membrane protein CPn_0346/CP_0414/CPj0346/CpB0353 of Chlamydia pneumoniae (Chlamydophila pneumoniae).